The following is a 417-amino-acid chain: Calreticulin (417 aa).

A signal peptide spans 1 to 17 (MLLPVPLLLGLVGLAAA). The segment at 18-197 (EPTIYFKEQF…NSQVESGSLE (180 aa)) is N-domain. 3 residues coordinate Ca(2+): Q26, K62, and K64. K64 carries the N6-(2-hydroxyisobutyryl)lysine modification. An alpha-D-glucoside contacts are provided by Y109, K111, Y128, and D135. The cysteines at positions 137 and 163 are disulfide-linked. An N6-acetyllysine modification is found at K159. One copy of the 1-1 repeat lies at 191–202 (VESGSLEDDWDF). Residues 191–255 (VESGSLEDDW…DAKKPEDWDE (65 aa)) form a 4 X approximate repeats region. A disordered region spans residues 193 to 277 (SGSLEDDWDF…NPEYKGEWKP (85 aa)). Residues 198–308 (DDWDFLPPKK…YSPDSNIYAY (111 aa)) form a P-domain region. Basic and acidic residues predominate over residues 207–251 (KIKDPDAVKPEDWDERAKIDDPTDSKPEDWDKPEHIPDPDAKKPE). An N6-acetyllysine modification is found at K209. 6 repeat units span residues 210–221 (DPDAVKPEDWDE), 227–238 (DPTDSKPEDWDK), 244–255 (DPDAKKPEDWDE), 259–269 (GEWEPPVIQNP), 273–283 (GEWKPRQIDNP), and 287–297 (GTWIHPEIDNP). Residues 237-270 (DKPEHIPDPDAKKPEDWDEEMDGEWEPPVIQNPE) form an interaction with PPIB region. A compositionally biased stretch (acidic residues) spans 252 to 261 (DWDEEMDGEW). Residues 259–297 (GEWEPPVIQNPEYKGEWKPRQIDNPDYKGTWIHPEIDNP) are 3 X approximate repeats. The C-domain stretch occupies residues 309 to 417 (ENFAVLGLDL…AAAGQAKDEL (109 aa)). An an alpha-D-glucoside-binding site is contributed by D317. D328 contacts Ca(2+). The segment at 350-417 (TKAAEKQMKD…AAAGQAKDEL (68 aa)) is disordered. Residues 352–379 (AAEKQMKDKQDEEQRLKEEEEEKKRKEE) are compositionally biased toward basic and acidic residues. Residues 380–408 (EEVDKEDEEDKDEDEEEEDEKEEEEEEDA) are compositionally biased toward acidic residues. The Prevents secretion from ER signature appears at 414–417 (KDEL).

It belongs to the calreticulin family. Monomer. Component of an EIF2 complex at least composed of CELF1/CUGBP1, CALR, CALR3, EIF2S1, EIF2S2, HSP90B1 and HSPA5. Interacts with PDIA3/ERp57 and SPACA9. Interacts with TRIM21. Interacts with NR3C1. Interacts with PPIB. Interacts (via P-domain) with PDIA5. Interacts with CLCC1. In terms of tissue distribution, in blastocyst expressed in all blastomeres (at protein level). In embryos, expressed in spleen, kidney, liver, fat, muscle, ovary, granulosa cells and cumulus cells.

Its subcellular location is the endoplasmic reticulum lumen. It localises to the cytoplasm. The protein localises to the cytosol. The protein resides in the secreted. It is found in the extracellular space. Its subcellular location is the extracellular matrix. It localises to the cell surface. The protein localises to the sarcoplasmic reticulum lumen. The protein resides in the cytoplasmic vesicle. It is found in the secretory vesicle. Its subcellular location is the cortical granule. It localises to the cytolytic granule. Functionally, calcium-binding chaperone that promotes folding, oligomeric assembly and quality control in the endoplasmic reticulum (ER) via the calreticulin/calnexin cycle. This lectin interacts transiently with almost all of the monoglucosylated glycoproteins that are synthesized in the ER. Interacts with the DNA-binding domain of NR3C1 and mediates its nuclear export. Involved in maternal gene expression regulation. May participate in oocyte maturation via the regulation of calcium homeostasis. Present in the cortical granules of non-activated oocytes, is exocytosed during the cortical reaction in response to oocyte activation and might participate in the block to polyspermy. The sequence is that of Calreticulin (CALR) from Sus scrofa (Pig).